A 63-amino-acid polypeptide reads, in one-letter code: Metallothionein-like protein type 3 (63 aa).

It belongs to the metallothionein superfamily. Type 15 family.

Its function is as follows. Metallothioneins have a high content of cysteine residues that bind various heavy metals. In Actinidia deliciosa (Kiwi), this protein is Metallothionein-like protein type 3.